The following is a 349-amino-acid chain: Small ribosomal subunit protein uS2 (349 aa).

A disordered region spans residues 302-334 (QNNYDPSKRGYNPKYVNHKSTFNKFNNKKPVDS).

The protein belongs to the universal ribosomal protein uS2 family.

The protein is Small ribosomal subunit protein uS2 of Ureaplasma parvum serovar 3 (strain ATCC 27815 / 27 / NCTC 11736).